Consider the following 262-residue polypeptide: Adenosylcobinamide-GDP ribazoletransferase (262 aa).

A run of 7 helical transmembrane segments spans residues 37-57 (SMPL…ALCS), 58-78 (MFSF…GIWL), 112-132 (VGAF…LFLY), 139-159 (IPPA…AWLL), 183-203 (AVWA…FGGV), 205-225 (VWTS…AKPW), and 237-257 (VLGA…WLLH).

Belongs to the CobS family. Mg(2+) is required as a cofactor.

It localises to the cell membrane. The catalysed reaction is alpha-ribazole + adenosylcob(III)inamide-GDP = adenosylcob(III)alamin + GMP + H(+). It carries out the reaction alpha-ribazole 5'-phosphate + adenosylcob(III)inamide-GDP = adenosylcob(III)alamin 5'-phosphate + GMP + H(+). Its pathway is cofactor biosynthesis; adenosylcobalamin biosynthesis; adenosylcobalamin from cob(II)yrinate a,c-diamide: step 7/7. In terms of biological role, joins adenosylcobinamide-GDP and alpha-ribazole to generate adenosylcobalamin (Ado-cobalamin). Also synthesizes adenosylcobalamin 5'-phosphate from adenosylcobinamide-GDP and alpha-ribazole 5'-phosphate. The chain is Adenosylcobinamide-GDP ribazoletransferase from Geobacillus thermodenitrificans (strain NG80-2).